Here is a 246-residue protein sequence, read N- to C-terminus: Uridylate kinase (246 aa).

20-23 provides a ligand contact to ATP; it reads KISG. The segment at 28-33 is involved in allosteric activation by GTP; that stretch reads GDQGYG. Gly-62 is a UMP binding site. Residues Gly-63 and Arg-67 each coordinate ATP. UMP is bound by residues Asp-82 and 143–150; that span reads TGNPYFTT. ATP is bound by residues Thr-170, Tyr-176, and Asp-179.

It belongs to the UMP kinase family. Homohexamer.

It localises to the cytoplasm. It carries out the reaction UMP + ATP = UDP + ADP. It functions in the pathway pyrimidine metabolism; CTP biosynthesis via de novo pathway; UDP from UMP (UMPK route): step 1/1. Allosterically activated by GTP. Inhibited by UTP. Functionally, catalyzes the reversible phosphorylation of UMP to UDP. This is Uridylate kinase from Cereibacter sphaeroides (strain ATCC 17029 / ATH 2.4.9) (Rhodobacter sphaeroides).